A 274-amino-acid polypeptide reads, in one-letter code: Penicillin-insensitive murein endopeptidase (274 aa).

The signal sequence occupies residues 1–19 (MNKTAIALLALLASSASLA). 3 disulfides stabilise this stretch: C44-C265, C187-C235, and C216-C223. Positions 110, 113, 120, 147, 150, and 211 each coordinate Zn(2+). The interval 227–274 (PLPPPGDGCGAELQSWFEPPKPGTTKPEKKTPPPLPPSCQALLDEHVI) is disordered.

This sequence belongs to the peptidase M74 family. As to quaternary structure, dimer. Requires Zn(2+) as cofactor.

It localises to the periplasm. Its function is as follows. Murein endopeptidase that cleaves the D-alanyl-meso-2,6-diamino-pimelyl amide bond that connects peptidoglycan strands. Likely plays a role in the removal of murein from the sacculus. This Escherichia coli O9:H4 (strain HS) protein is Penicillin-insensitive murein endopeptidase.